Consider the following 367-residue polypeptide: Flagellar P-ring protein (367 aa).

The first 22 residues, methionine 1–alanine 22, serve as a signal peptide directing secretion.

It belongs to the FlgI family. In terms of assembly, the basal body constitutes a major portion of the flagellar organelle and consists of four rings (L,P,S, and M) mounted on a central rod.

Its subcellular location is the periplasm. The protein resides in the bacterial flagellum basal body. Assembles around the rod to form the L-ring and probably protects the motor/basal body from shearing forces during rotation. The chain is Flagellar P-ring protein from Legionella pneumophila (strain Lens).